The sequence spans 266 residues: PTS system sorbose-specific EIIC component (266 aa).

The region spanning 1–237 is the PTS EIIC type-4 domain; sequence MEISTLQIIA…GGVGVIIALI (237 aa). 7 consecutive transmembrane segments (helical) span residues 3–23, 33–53, 79–99, 100–120, 151–171, 183–203, and 219–239; these read ISTLQIIAIFIFSCIAGMGSV, LIACTVIGLILGDLKTGVMLG, IISAILVIVGHQSIAIGIAIA, LPVAAAGQVLTVFARTITVVF, VAIPALVVSLFVSADMVSSML, QIAGGFIVVVGYAMVLRMMGV, and YLDFSLLAFGGVGVIIALIYI.

The protein resides in the cell inner membrane. Its function is as follows. The phosphoenolpyruvate-dependent sugar phosphotransferase system (PTS), a major carbohydrate active transport system, catalyzes the phosphorylation of incoming sugar substrates concomitant with their translocation across the cell membrane. The enzyme II SorABFM PTS system is involved in L-sorbose transport. The polypeptide is PTS system sorbose-specific EIIC component (Klebsiella pneumoniae).